Reading from the N-terminus, the 794-residue chain is MAAKRGLAKQKSRVTKACDRCHRKKIKCNSKKPCFGCIGSQSKCTYRNQFREPIEAFFNYTGSLSNDLDNAKCSIAKLKAQLPPSAPASLQKGLANICTELEKIQPQLYLNLDSKEISSYGGLKSIETEIIGKQSKSLNRFSNAFESNTAQNVSMYFGVYSPLLYFASTGISWITKKLISCSNDRETRETIYLFLKFLDASSASHAGPKVTSISPLEYYSKLNGLSCGNDVLIQHIMSNISNEIKGNTNINQTIKFNKPTDWFMYGVQLMEQHHKALDRKSSKKLLPLKYFLEQDELIFCLCLEYFERSLFSTMYDLTILKGLVSLMKHRYWIDDPFVLGRIISTMSRRSLDAGLNRWEYYIGQDEDTAEEYRKLWWDCYWWDRWYSLVTGKQPLIPHEMTSCLFPKDVVGLGVDDSMDCFTLINLVELDPSKFDICISFGYILLTKIITAVFSGLLYNRHFTDYRLFATPNAKDLNGTARQLMVEFSKICKIFQCIQDKLIPFLKQYSENSNVFELYTHFGFAKVCCFQGMESLILRIQNLLQERERIELDSCVKDIRLQTFEASVDILTDVLKHEDTFYIFRCSWFIYAILMNITLNFIETPRRNSICYLSLMCRMIASYNDLFVSSGNVNFKGNNAFSKKLENGTAVSFILTRICCQMYTRSQKMAKESLFCELKKYGQACSDAGQAALDIECIWYRNIIGEHKESSFRKEILSILDREMGDLVNNRVIGVQGKNQEGACYEKLSPSSTSVSVGMDFCSLENFVTAESLPDLLNLFWEDTEFGITKENLGE.

Positions 18, 21, 28, 34, 37, and 44 each coordinate Zn(2+). Residues 18–44 (CDRCHRKKIKCNSKKPCFGCIGSQSKC) constitute a DNA-binding region (zn(2)-C6 fungal-type).

Its subcellular location is the nucleus. Functionally, transcriptional activator required for growth on non-fermentable carbon sources and that regulates genes involved in fatty acid utilization. Acts as a direct activator that binds the promoters of oleate utilizing genes, encoded key enzymes in beta-oxidation and NADPH regeneration (POX1, FOX2,POT1 and IDP2), the glyoxylate shunt (MLS1 and ICL1), and gluconeogenesis (PCK1 and FBP1). Also regulates the abundance of peroxisomes that are vital for fatty acid oxidation. This Saccharomyces cerevisiae (strain ATCC 204508 / S288c) (Baker's yeast) protein is Transcription factor TOG1.